A 540-amino-acid polypeptide reads, in one-letter code: Chaperonin GroEL (540 aa).

ATP contacts are provided by residues 29-32 (TIGP), 86-90 (DGTTT), Gly-413, 477-479 (NAA), and Asp-493.

It belongs to the chaperonin (HSP60) family. Forms a cylinder of 14 subunits composed of two heptameric rings stacked back-to-back. Interacts with the co-chaperonin GroES.

It is found in the cytoplasm. The catalysed reaction is ATP + H2O + a folded polypeptide = ADP + phosphate + an unfolded polypeptide.. Functionally, together with its co-chaperonin GroES, plays an essential role in assisting protein folding. The GroEL-GroES system forms a nano-cage that allows encapsulation of the non-native substrate proteins and provides a physical environment optimized to promote and accelerate protein folding. This chain is Chaperonin GroEL, found in Lactobacillus helveticus (strain DPC 4571).